The chain runs to 305 residues: Ornithine carbamoyltransferase, catabolic (305 aa).

Carbamoyl phosphate-binding positions include 50 to 53, Gln77, Arg101, and 128 to 131; these read STRT and HPLQ. L-ornithine is bound by residues Asn159, Asp223, and 227 to 228; that span reads SM. Residues 263–264 and Arg291 contribute to the carbamoyl phosphate site; that span reads CL.

It belongs to the aspartate/ornithine carbamoyltransferase superfamily. OTCase family.

It localises to the cytoplasm. The enzyme catalyses carbamoyl phosphate + L-ornithine = L-citrulline + phosphate + H(+). Its pathway is amino-acid degradation; L-arginine degradation via ADI pathway; carbamoyl phosphate from L-arginine: step 2/2. Reversibly catalyzes the transfer of the carbamoyl group from carbamoyl phosphate (CP) to the N(epsilon) atom of ornithine (ORN) to produce L-citrulline. The polypeptide is Ornithine carbamoyltransferase, catabolic (Thermoplasma acidophilum (strain ATCC 25905 / DSM 1728 / JCM 9062 / NBRC 15155 / AMRC-C165)).